The chain runs to 378 residues: Histone deacetylase 8 (378 aa).

The histone deacetylase stretch occupies residues 15–325 (RSVVYVYSPE…WTYLTGTVLG (311 aa)). Position 102 (Asp102) interacts with substrate. His144 acts as the Proton acceptor in catalysis. Gly152 is a substrate binding site. 3 residues coordinate a divalent metal cation: Asp179, His181, and Asp268. Substrate is bound at residue Tyr307.

Belongs to the histone deacetylase family. HD type 1 subfamily. A divalent metal cation serves as cofactor.

The protein localises to the nucleus. The protein resides in the chromosome. It localises to the cytoplasm. It carries out the reaction N(6)-acetyl-L-lysyl-[histone] + H2O = L-lysyl-[histone] + acetate. It catalyses the reaction N(6)-acetyl-L-lysyl-[protein] + H2O = L-lysyl-[protein] + acetate. The enzyme catalyses N(6)-(2E)-butenoyl-L-lysyl-[protein] + H2O = (2E)-2-butenoate + L-lysyl-[protein]. With respect to regulation, its activity is inhibited by trichostatin A (TSA) and butyrate, 2 well known histone deacetylase inhibitors. In terms of biological role, histone deacetylase that catalyzes the deacetylation of lysine residues on the N-terminal part of the core histones (H2A, H2B, H3 and H4). Histone deacetylation gives a tag for epigenetic repression and plays an important role in transcriptional regulation, cell cycle progression and developmental events. Histone deacetylases act via the formation of large multiprotein complexes. Also involved in the deacetylation of non-histone proteins. In addition to protein deacetylase activity, also has protein-lysine deacylase activity: acts as a protein decrotonylase by mediating decrotonylation ((2E)-butenoyl) of histones. The polypeptide is Histone deacetylase 8 (hdac8) (Danio rerio (Zebrafish)).